Here is a 228-residue protein sequence, read N- to C-terminus: Sec-independent protein translocase protein TatB (228 aa).

The chain crosses the membrane as a helical span at residues 1–21 (MFDFGLGELVFVGIIALIVLG). Disordered regions lie at residues 138–162 (RSYA…AETD) and 195–228 (PVPH…VRKS). The segment covering 206 to 228 (AISRKRDLRPKSRAKPKLRVRKS) has biased composition (basic residues).

This sequence belongs to the TatB family. As to quaternary structure, the Tat system comprises two distinct complexes: a TatABC complex, containing multiple copies of TatA, TatB and TatC subunits, and a separate TatA complex, containing only TatA subunits. Substrates initially bind to the TatABC complex, which probably triggers association of the separate TatA complex to form the active translocon.

Its subcellular location is the cell inner membrane. Its function is as follows. Part of the twin-arginine translocation (Tat) system that transports large folded proteins containing a characteristic twin-arginine motif in their signal peptide across membranes. Together with TatC, TatB is part of a receptor directly interacting with Tat signal peptides. TatB may form an oligomeric binding site that transiently accommodates folded Tat precursor proteins before their translocation. This chain is Sec-independent protein translocase protein TatB, found in Neisseria meningitidis serogroup A / serotype 4A (strain DSM 15465 / Z2491).